The following is a 466-amino-acid chain: Ribulose bisphosphate carboxylase large chain (466 aa).

At Lys-5 the chain carries N6,N6,N6-trimethyllysine. Substrate-binding residues include Asn-114 and Thr-164. Lys-166 functions as the Proton acceptor in the catalytic mechanism. Lys-168 serves as a coordination point for substrate. Residues Lys-192, Asp-194, and Glu-195 each contribute to the Mg(2+) site. Lys-192 bears the N6-carboxylysine mark. His-285 (proton acceptor) is an active-site residue. 3 residues coordinate substrate: Arg-286, His-318, and Ser-370.

Belongs to the RuBisCO large chain family. Type I subfamily. Heterohexadecamer of 8 large chains and 8 small chains; disulfide-linked. The disulfide link is formed within the large subunit homodimers. Mg(2+) serves as cofactor. In terms of processing, the disulfide bond which can form in the large chain dimeric partners within the hexadecamer appears to be associated with oxidative stress and protein turnover.

It localises to the plastid. The protein localises to the chloroplast. The catalysed reaction is 2 (2R)-3-phosphoglycerate + 2 H(+) = D-ribulose 1,5-bisphosphate + CO2 + H2O. It catalyses the reaction D-ribulose 1,5-bisphosphate + O2 = 2-phosphoglycolate + (2R)-3-phosphoglycerate + 2 H(+). Its function is as follows. RuBisCO catalyzes two reactions: the carboxylation of D-ribulose 1,5-bisphosphate, the primary event in carbon dioxide fixation, as well as the oxidative fragmentation of the pentose substrate in the photorespiration process. Both reactions occur simultaneously and in competition at the same active site. The protein is Ribulose bisphosphate carboxylase large chain of Cercidiphyllum japonicum (Katsura tree).